Here is a 203-residue protein sequence, read N- to C-terminus: B-cell CLL/lymphoma 7 protein family member B-A (203 aa).

Disordered regions lie at residues 55–80 and 94–148; these read KEKE…ESSD and SNQS…EIME. The span at 109–129 shows a compositional bias: low complexity; sequence ADSSNNSSPPASEPVSPAPQS.

This sequence belongs to the BCL7 family.

This Danio rerio (Zebrafish) protein is B-cell CLL/lymphoma 7 protein family member B-A (bcl7ba).